A 373-amino-acid chain; its full sequence is Probable quinol oxidase subunit 2 (373 aa).

Positions 1–19 (MSKFKSLLLLFGSLILLSG) are cleaved as a signal peptide. Cys-20 carries N-palmitoyl cysteine lipidation. Cys-20 carries the S-diacylglycerol cysteine lipid modification. 2 helical membrane-spanning segments follow: residues 38–58 (FLIM…LILF) and 82–102 (LETI…IPTV). Composition is skewed to basic and acidic residues over residues 292-320 (EERT…ERHG) and 339-373 (EESH…GGGH). The tract at residues 292 to 373 (EERTADVLDK…KKDHENGGGH (82 aa)) is disordered.

This sequence belongs to the cytochrome c oxidase subunit 2 family.

Its subcellular location is the cell membrane. The catalysed reaction is 2 a quinol + O2 = 2 a quinone + 2 H2O. Catalyzes quinol oxidation with the concomitant reduction of oxygen to water. Subunit II transfers the electrons from a quinol to the binuclear center of the catalytic subunit I. This is Probable quinol oxidase subunit 2 (qoxA) from Staphylococcus saprophyticus subsp. saprophyticus (strain ATCC 15305 / DSM 20229 / NCIMB 8711 / NCTC 7292 / S-41).